The chain runs to 929 residues: Bifunctional glutamine synthetase adenylyltransferase/adenylyl-removing enzyme (929 aa).

The interval 1–422 (MTTPISTSRA…TRHFEQIFAV (422 aa)) is adenylyl removase. The tract at residues 429-929 (LGTFARIRPE…FQLWEDVFGT (501 aa)) is adenylyl transferase.

It belongs to the GlnE family. Mg(2+) is required as a cofactor.

The enzyme catalyses [glutamine synthetase]-O(4)-(5'-adenylyl)-L-tyrosine + phosphate = [glutamine synthetase]-L-tyrosine + ADP. It carries out the reaction [glutamine synthetase]-L-tyrosine + ATP = [glutamine synthetase]-O(4)-(5'-adenylyl)-L-tyrosine + diphosphate. Functionally, involved in the regulation of glutamine synthetase GlnA, a key enzyme in the process to assimilate ammonia. When cellular nitrogen levels are high, the C-terminal adenylyl transferase (AT) inactivates GlnA by covalent transfer of an adenylyl group from ATP to specific tyrosine residue of GlnA, thus reducing its activity. Conversely, when nitrogen levels are low, the N-terminal adenylyl removase (AR) activates GlnA by removing the adenylyl group by phosphorolysis, increasing its activity. The regulatory region of GlnE binds the signal transduction protein PII (GlnB) which indicates the nitrogen status of the cell. The sequence is that of Bifunctional glutamine synthetase adenylyltransferase/adenylyl-removing enzyme from Nitrosomonas eutropha (strain DSM 101675 / C91 / Nm57).